Here is a 383-residue protein sequence, read N- to C-terminus: Outer membrane protein assembly factor BamB (383 aa).

The N-terminal stretch at 1–23 (MMLLKRCNRRALVALAAVLLLAA) is a signal peptide. C24 carries N-palmitoyl cysteine lipidation. A lipid anchor (S-diacylglycerol cysteine) is attached at C24.

The protein belongs to the BamB family. As to quaternary structure, part of the Bam complex.

It localises to the cell outer membrane. In terms of biological role, part of the outer membrane protein assembly complex, which is involved in assembly and insertion of beta-barrel proteins into the outer membrane. This is Outer membrane protein assembly factor BamB from Alkalilimnicola ehrlichii (strain ATCC BAA-1101 / DSM 17681 / MLHE-1).